A 357-amino-acid chain; its full sequence is Probable butyrate kinase 1 (357 aa).

This sequence belongs to the acetokinase family.

The protein localises to the cytoplasm. It catalyses the reaction butanoate + ATP = butanoyl phosphate + ADP. The protein is Probable butyrate kinase 1 of Caldanaerobacter subterraneus subsp. tengcongensis (strain DSM 15242 / JCM 11007 / NBRC 100824 / MB4) (Thermoanaerobacter tengcongensis).